The following is a 98-amino-acid chain: NADH-ubiquinone oxidoreductase chain 4L (98 aa).

3 consecutive transmembrane segments (helical) span residues 1 to 21 (MSMV…GLLM), 29 to 49 (SLLC…MTIL), and 61 to 81 (IILL…LVMV).

It belongs to the complex I subunit 4L family. Core subunit of respiratory chain NADH dehydrogenase (Complex I) which is composed of 45 different subunits.

The protein resides in the mitochondrion inner membrane. It catalyses the reaction a ubiquinone + NADH + 5 H(+)(in) = a ubiquinol + NAD(+) + 4 H(+)(out). Functionally, core subunit of the mitochondrial membrane respiratory chain NADH dehydrogenase (Complex I) which catalyzes electron transfer from NADH through the respiratory chain, using ubiquinone as an electron acceptor. Part of the enzyme membrane arm which is embedded in the lipid bilayer and involved in proton translocation. This is NADH-ubiquinone oxidoreductase chain 4L (MT-ND4L) from Otaria byronia (South American sea lion).